A 631-amino-acid chain; its full sequence is Probable glutamate--tRNA ligase, cytoplasmic (631 aa).

139-141 (RFP) contacts L-glutamate. A 'HIGH' region motif is present at residues 144–153 (PSGFLHIGHI). Residue H149 coordinates ATP. L-glutamate contacts are provided by residues D173, 311–315 (YDFAC), and R329. ATP-binding positions include E332 and 367 to 371 (VLSKR). The short motif at 367 to 371 (VLSKR) is the 'KMSKS' region element.

Belongs to the class-I aminoacyl-tRNA synthetase family. Glutamate--tRNA ligase type 2 subfamily.

The protein resides in the cytoplasm. The enzyme catalyses tRNA(Glu) + L-glutamate + ATP = L-glutamyl-tRNA(Glu) + AMP + diphosphate. In Enterocytozoon bieneusi (strain H348) (Microsporidian parasite), this protein is Probable glutamate--tRNA ligase, cytoplasmic.